Reading from the N-terminus, the 257-residue chain is ATP synthase subunit a (257 aa).

The next 6 helical transmembrane spans lie at 34-54 (ITNIGLYMTIAAFIAFYFSIL), 93-113 (YFPFMYTLFIFILINNLIGMV), 122-142 (HFILTFSLSFTVVLGATVLGF), 149-169 (FFSLFVPAGCPLGLLPLLVLI), 187-207 (ANILSGHMLLNILSGFTYNIM), and 210-230 (GIIFFILGLLPLAFIIAFSGL).

Belongs to the ATPase A chain family. As to quaternary structure, F-type ATPases have 2 components, CF(1) - the catalytic core - and CF(0) - the membrane proton channel. CF(1) has five subunits: alpha(3), beta(3), gamma(1), delta(1), epsilon(1). CF(0) has three main subunits: a, b and c.

The protein resides in the mitochondrion inner membrane. In terms of biological role, mitochondrial membrane ATP synthase (F(1)F(0) ATP synthase or Complex V) produces ATP from ADP in the presence of a proton gradient across the membrane which is generated by electron transport complexes of the respiratory chain. F-type ATPases consist of two structural domains, F(1) - containing the extramembraneous catalytic core and F(0) - containing the membrane proton channel, linked together by a central stalk and a peripheral stalk. During catalysis, ATP synthesis in the catalytic domain of F(1) is coupled via a rotary mechanism of the central stalk subunits to proton translocation. Key component of the proton channel; it may play a direct role in the translocation of protons across the membrane. The sequence is that of ATP synthase subunit a (ATP6) from Cochliobolus heterostrophus (Southern corn leaf blight fungus).